Reading from the N-terminus, the 105-residue chain is Probable tetrachloroethene reductive dehalogenase membrane anchor protein (105 aa).

3 helical membrane passes run 3 to 23 (IYDV…QYGI), 35 to 55 (IPLQ…LAWG), and 66 to 86 (AIGM…IITY).

This sequence belongs to the PceB family.

It localises to the cell membrane. Its function is as follows. May act as a membrane anchor for the tetrachloroethene reductive dehalogenase PceA. The sequence is that of Probable tetrachloroethene reductive dehalogenase membrane anchor protein from Desulfitobacterium hafniense (Desulfitobacterium frappieri).